A 151-amino-acid polypeptide reads, in one-letter code: Snaclec 3 (151 aa).

Residues 1 to 23 (MGRLVFVSFSLLVVFLSLSGTAA) form the signal peptide. 3 disulfide bridges follow: Cys-25–Cys-36, Cys-53–Cys-149, and Cys-125–Cys-141. The C-type lectin domain occupies 32-150 (YEGHCYKPFN…CGEINPFVCK (119 aa)).

The protein belongs to the snaclec family. In terms of assembly, heterodimer; disulfide-linked. As to expression, expressed by the venom gland.

It is found in the secreted. Its function is as follows. Interferes with one step of hemostasis (modulation of platelet aggregation, or coagulation cascade, for example). In Sistrurus catenatus edwardsii (Desert massasauga), this protein is Snaclec 3.